The chain runs to 86 residues: Large ribosomal subunit protein bL27 (86 aa).

The interval 1–22 (MATKKAGGSSRNGRDSAGRRLG) is disordered.

Belongs to the bacterial ribosomal protein bL27 family.

This chain is Large ribosomal subunit protein bL27, found in Rickettsia rickettsii (strain Iowa).